Consider the following 258-residue polypeptide: MKRINKTAEDQFLINFKAQNPNGTWDEFRNHEQGILYKRLKQHICNDQMYLCAYCEIDLDRENEHEIKVEHFKSKSGSLPGGSNWHLEWSNLLAVCLGGTNTGDDFELPANLSCDSYKSHYEDKNKINDKDWTGKILLPLTLPDAHNFFTFEKVTGKLLPNESYCNTISIDGKPAAETLSIVTKTIEVLNLNCSRLNNARRKLLFHFNNCARERNLRKLHNLLLQWNQGEPKFFQTTRDIIIRDDRICQGLLNGTIRY.

Functionally, putative HNH endonuclease component of antiviral defense system retron Ec83, composed of a non-coding RNA (ncRNA), a reverse transcriptase (RT), a probable ATPase and this protein. Expression of retron Ec78 confers protection against bacteriophage T2, T4 and T6. At multiplicity of infection (MOI) of 0.02 cultures slow growth when infected with T4 but do not collapse, at MOI 2 cultures enter growth stasis. In Escherichia coli, this protein is Retron Ec83 putative HNH endonuclease.